The primary structure comprises 109 residues: Spermidine export protein MdtI (109 aa).

A run of 4 helical transmembrane segments spans residues 6 to 26 (WVHAAWLAMAIVLEIVANVFL), 36 to 56 (FYGILSLAAVLAAFSALSQAV), 64 to 84 (AYALWGGFGIAATLAAGWVLF), and 88 to 108 (LNNKGWVGVVLLLIGMIMIKL).

This sequence belongs to the drug/metabolite transporter (DMT) superfamily. Small multidrug resistance (SMR) (TC 2.A.7.1) family. MdtI subfamily. As to quaternary structure, forms a complex with MdtJ.

Its subcellular location is the cell inner membrane. In terms of biological role, catalyzes the excretion of spermidine. The protein is Spermidine export protein MdtI of Citrobacter koseri (strain ATCC BAA-895 / CDC 4225-83 / SGSC4696).